The primary structure comprises 188 residues: 2-amino-4-hydroxy-6-hydroxymethyldihydropteridine pyrophosphokinase (188 aa).

Belongs to the HPPK family.

It catalyses the reaction 6-hydroxymethyl-7,8-dihydropterin + ATP = (7,8-dihydropterin-6-yl)methyl diphosphate + AMP + H(+). It functions in the pathway cofactor biosynthesis; tetrahydrofolate biosynthesis; 2-amino-4-hydroxy-6-hydroxymethyl-7,8-dihydropteridine diphosphate from 7,8-dihydroneopterin triphosphate: step 4/4. Functionally, catalyzes the transfer of pyrophosphate from adenosine triphosphate (ATP) to 6-hydroxymethyl-7,8-dihydropterin, an enzymatic step in folate biosynthesis pathway. The polypeptide is 2-amino-4-hydroxy-6-hydroxymethyldihydropteridine pyrophosphokinase (folK) (Mycobacterium tuberculosis (strain ATCC 25618 / H37Rv)).